Consider the following 248-residue polypeptide: Triosephosphate isomerase (248 aa).

Substrate is bound by residues Asn-10 and Lys-12. His-95 functions as the Electrophile in the catalytic mechanism. Glu-165 serves as the catalytic Proton acceptor.

It belongs to the triosephosphate isomerase family. Homodimer.

The enzyme catalyses D-glyceraldehyde 3-phosphate = dihydroxyacetone phosphate. It participates in carbohydrate biosynthesis; gluconeogenesis. The protein operates within carbohydrate degradation; glycolysis; D-glyceraldehyde 3-phosphate from glycerone phosphate: step 1/1. In Neurospora crassa (strain ATCC 24698 / 74-OR23-1A / CBS 708.71 / DSM 1257 / FGSC 987), this protein is Triosephosphate isomerase (tpi-1).